Consider the following 626-residue polypeptide: Chaperone protein DnaK (626 aa).

Position 197 is a phosphothreonine; by autocatalysis (Thr197). Low complexity predominate over residues 598 to 612; that stretch reads AQGEQGQAAQPQAET. The segment at 598-626 is disordered; it reads AQGEQGQAAQPQAETQGDDVQDVEFEEVK. Positions 613 to 626 are enriched in acidic residues; it reads QGDDVQDVEFEEVK.

This sequence belongs to the heat shock protein 70 family.

Its function is as follows. Acts as a chaperone. This Flavobacterium psychrophilum (strain ATCC 49511 / DSM 21280 / CIP 103535 / JIP02/86) protein is Chaperone protein DnaK.